Here is a 76-residue protein sequence, read N- to C-terminus: Probable small nuclear ribonucleoprotein G (76 aa).

In terms of domain architecture, Sm spans 4–76 (AHPPEVKKYM…IVMVEALDRV (73 aa)).

This sequence belongs to the snRNP Sm proteins family. As to quaternary structure, interacts with the SMN complex. Core component of the spliceosomal U1, U2, U4 and U5 small nuclear ribonucleoproteins (snRNPs), the building blocks of the spliceosome. Most spliceosomal snRNPs contain a common set of Sm proteins, SNRPB, SNRPD1, SNRPD2, SNRPD3, SNRPE, SNRPF and SNRPG that assemble in a heptameric protein ring on the Sm site of the small nuclear RNA to form the core snRNP. Component of the U1 snRNP. Component of the U4/U6-U5 tri-snRNP complex. Component of the U7 snRNP complex. Component of the U11/U12 snRNPs that are part of the U12-type spliceosome.

It is found in the cytoplasm. Its subcellular location is the cytosol. It localises to the nucleus. Functionally, plays a role in pre-mRNA splicing as a core component of the spliceosomal U1, U2, U4 and U5 small nuclear ribonucleoproteins (snRNPs), the building blocks of the spliceosome. Component of both the pre-catalytic spliceosome B complex and activated spliceosome C complexes. Is also a component of the minor U12 spliceosome. In Drosophila melanogaster (Fruit fly), this protein is Probable small nuclear ribonucleoprotein G.